The primary structure comprises 285 residues: Pseudouridine-5'-phosphate glycosidase (285 aa).

E17 serves as the catalytic Proton donor. K77 and V97 together coordinate substrate. Residue D126 coordinates Mn(2+). 128-130 (SQD) provides a ligand contact to substrate. K147 serves as the catalytic Nucleophile.

Belongs to the pseudouridine-5'-phosphate glycosidase family. As to quaternary structure, homotrimer. The cofactor is Mn(2+).

It catalyses the reaction D-ribose 5-phosphate + uracil = psi-UMP + H2O. Its function is as follows. Catalyzes the reversible cleavage of pseudouridine 5'-phosphate (PsiMP) to ribose 5-phosphate and uracil. Functions biologically in the cleavage direction, as part of a pseudouridine degradation pathway. The chain is Pseudouridine-5'-phosphate glycosidase from Thermotoga maritima (strain ATCC 43589 / DSM 3109 / JCM 10099 / NBRC 100826 / MSB8).